The following is a 936-amino-acid chain: Isoleucine--tRNA ligase (936 aa).

The 'HIGH' region signature appears at 58–68; the sequence is PYANGRAHLGT. Glu-561 lines the L-isoleucyl-5'-AMP pocket. The 'KMSKS' region signature appears at 602 to 606; the sequence is KMSKS. Lys-605 is an ATP binding site. Zn(2+)-binding residues include Cys-899, Cys-902, Cys-919, and Cys-922.

Belongs to the class-I aminoacyl-tRNA synthetase family. IleS type 1 subfamily. In terms of assembly, monomer. The cofactor is Zn(2+).

The protein resides in the cytoplasm. It catalyses the reaction tRNA(Ile) + L-isoleucine + ATP = L-isoleucyl-tRNA(Ile) + AMP + diphosphate. Functionally, catalyzes the attachment of isoleucine to tRNA(Ile). As IleRS can inadvertently accommodate and process structurally similar amino acids such as valine, to avoid such errors it has two additional distinct tRNA(Ile)-dependent editing activities. One activity is designated as 'pretransfer' editing and involves the hydrolysis of activated Val-AMP. The other activity is designated 'posttransfer' editing and involves deacylation of mischarged Val-tRNA(Ile). This chain is Isoleucine--tRNA ligase, found in Coxiella burnetii (strain CbuK_Q154) (Coxiella burnetii (strain Q154)).